The following is a 506-amino-acid chain: uncharacterized protein (506 aa).

2 disordered regions span residues 104–144 (PNSS…ATSS) and 397–456 (QQQK…DQLP). Residues 130-144 (ESSPTLSSSSLATSS) are compositionally biased toward low complexity. A compositionally biased stretch (basic and acidic residues) spans 405 to 443 (IKDEDKNEKENKSENEEKEKEKEKEKEKEKEKEKEKEKE). Residues 405–455 (IKDEDKNEKENKSENEEKEKEKEKEKEKEKEKEKEKEKENEEGEEDNGDQL) are a coiled coil.

This is an uncharacterized protein from Dictyostelium discoideum (Social amoeba).